The chain runs to 453 residues: Trypanin (453 aa).

Basic and acidic residues predominate over residues 1–10 (MPPRTAAERG). Residues 1–22 (MPPRTAAERGGRRKSVKAPPPV) form a disordered region. 2 coiled-coil regions span residues 60–156 (TITK…EMNV) and 185–377 (SCEA…LVEE).

This sequence belongs to the DRC4 family.

Its subcellular location is the cytoplasm. It is found in the cytoskeleton. The protein resides in the cell projection. It localises to the cilium. The protein localises to the flagellum. Its function is as follows. Cytoskeletal linker that plays a central role in the flagellum cell motility. Required for directional cell motility. Plays a role as part of a dynein regulatory system that regulates flagellar beat in response to signals from the central pair apparatus and radial spokes in procyclic cells. Also plays an essential role in the bloodstream form of the trypanosomes as its silencing is lethal for the circulating form. This chain is Trypanin, found in Trypanosoma brucei rhodesiense.